A 700-amino-acid chain; its full sequence is Elongation factor G 1 (700 aa).

One can recognise a tr-type G domain in the interval 8-290; that stretch reads ERYRNIGISA…AVIEYLPSPI (283 aa). GTP contacts are provided by residues 17–24, 88–92, and 142–145; these read AHIDAGKT, DTPGH, and NKMD.

This sequence belongs to the TRAFAC class translation factor GTPase superfamily. Classic translation factor GTPase family. EF-G/EF-2 subfamily.

The protein resides in the cytoplasm. Functionally, catalyzes the GTP-dependent ribosomal translocation step during translation elongation. During this step, the ribosome changes from the pre-translocational (PRE) to the post-translocational (POST) state as the newly formed A-site-bound peptidyl-tRNA and P-site-bound deacylated tRNA move to the P and E sites, respectively. Catalyzes the coordinated movement of the two tRNA molecules, the mRNA and conformational changes in the ribosome. The sequence is that of Elongation factor G 1 from Bordetella avium (strain 197N).